The primary structure comprises 394 residues: Exodeoxyribonuclease 7 large subunit (394 aa).

It belongs to the XseA family. As to quaternary structure, heterooligomer composed of large and small subunits.

It localises to the cytoplasm. The catalysed reaction is Exonucleolytic cleavage in either 5'- to 3'- or 3'- to 5'-direction to yield nucleoside 5'-phosphates.. In terms of biological role, bidirectionally degrades single-stranded DNA into large acid-insoluble oligonucleotides, which are then degraded further into small acid-soluble oligonucleotides. This chain is Exodeoxyribonuclease 7 large subunit, found in Thermotoga maritima (strain ATCC 43589 / DSM 3109 / JCM 10099 / NBRC 100826 / MSB8).